The chain runs to 486 residues: Heme A synthase COX15 (486 aa).

The N-terminal 33 residues, 1–33 (MLFRNIEVGRQAAKLLTRTSSRLAWQSIGASRN), are a transit peptide targeting the mitochondrion. Topologically, residues 34–85 (ISTIRQQIRKTQLYNFKKTVSIRPFSLSSPVFKPHVASESNPIESRLKTSKN) are mitochondrial matrix. Residues 86 to 106 (VAYWLIGTSGLVFGIVVLGGL) traverse the membrane as a helical segment. At 107 to 170 (TRLTESGLSI…FIFFMEWIHR (64 aa)) the chain is on the mitochondrial intermembrane side. Residue His-169 participates in heme o binding. A helical membrane pass occupies residues 171–191 (LWGRAIGAVFILPAVYFAVSK). The Mitochondrial matrix portion of the chain corresponds to 192-200 (KTSGHVNKR). A helical membrane pass occupies residues 201-221 (LFGLAGLLGLQGFVGWWMVKS). The Mitochondrial intermembrane portion of the chain corresponds to 222–243 (GLDQEQLDARKSKPTVSQYRLT). A helical membrane pass occupies residues 244-264 (THLGTAFFLYMGMLWTGLEIL). His-245 contacts heme o. The Mitochondrial matrix segment spans residues 265–293 (RECKWIKNPVQAISLFKKLDNPAIGPMRK). Residues 294–314 (ISLALLAVSFLTAMSGGMVAG) traverse the membrane as a helical segment. Residues 315–364 (LDAGWVYNTWPKMGERWFPSSRELMDENFCRREDKKDLWWRNLLENPVTV) lie on the Mitochondrial intermembrane side of the membrane. A helical transmembrane segment spans residues 365 to 387 (QLVHRTCAYVAFTSVLAAHMYAI). A heme b-binding site is contributed by His-368. The Mitochondrial matrix portion of the chain corresponds to 388–402 (KKKAVIPRNAMTSLH). Residues 403–423 (VMMGVVTLQATLGILTILYLV) traverse the membrane as a helical segment. Position 424 (Pro-424) is a topological domain, mitochondrial intermembrane. A helical transmembrane segment spans residues 425-445 (ISLASIHQAGALALLTSSLVF). His-431 is a binding site for heme b. The Mitochondrial matrix portion of the chain corresponds to 446 to 486 (ASQLRKPRAPMRNVIITLPHSSKVTSGKILSEASKLASKPL).

It belongs to the COX15/CtaA family. Type 2 subfamily. Forms 200-350 kDa oligomeric complexes independent on heme binding. In addition to form homooligomeric complexes, a portion also associates with the mitochondrial respiratory supercomplexes. Interacts with CcO assembly factors PET117, SHY1, COA3 and COA1, CcO subunit COX13 and cytochrome b-c1 subunit COR1. Heme b serves as cofactor.

Its subcellular location is the mitochondrion inner membrane. It carries out the reaction Fe(II)-heme o + 2 A + H2O = Fe(II)-heme a + 2 AH2. It participates in porphyrin-containing compound metabolism; heme A biosynthesis; heme A from heme O: step 1/1. Its function is as follows. Catalyzes the second reaction in the biosynthesis of heme A, a prosthetic group of mitochondrial cytochrome c oxidase (CcO). Heme A is synthesized from heme B by two sequential enzymatic reactions catalyzed by heme O synthase (HOS/COX10) and heme A synthase (HAS/COX15). HAS catalyzes the conversion of heme O to heme A by two successive hydroxylations of the methyl group at C8, in a reaction that involves matrix ferredoxin YAH1 and ferredoxin reductase ARH1. The first hydroxylation forms heme I, the second hydroxylation results in an unstable dihydroxymethyl group, which spontaneously dehydrates, resulting in the formyl group of heme A. May also play a secondary role in CcO assembly. Plays a role in the maturation of COX1, the heme A-containing structural CcO subunit, possibly by interacting with the COX1-containing sub-assembly complexes that form prior to heme A insertion. May also positively regulate the upstream enzymatic reaction, farnesylation of heme B by HOS/COX10. The protein is Heme A synthase COX15 of Saccharomyces cerevisiae (strain ATCC 204508 / S288c) (Baker's yeast).